Here is a 183-residue protein sequence, read N- to C-terminus: Translation initiation factor IF-3 (183 aa).

It belongs to the IF-3 family. As to quaternary structure, monomer.

The protein localises to the cytoplasm. In terms of biological role, IF-3 binds to the 30S ribosomal subunit and shifts the equilibrium between 70S ribosomes and their 50S and 30S subunits in favor of the free subunits, thus enhancing the availability of 30S subunits on which protein synthesis initiation begins. The protein is Translation initiation factor IF-3 of Aliivibrio salmonicida (strain LFI1238) (Vibrio salmonicida (strain LFI1238)).